We begin with the raw amino-acid sequence, 1258 residues long: Plasma membrane calcium-transporting ATPase 3 (1258 aa).

A compositionally biased stretch (polar residues) spans 1-19 (MGDMANSSIEFHPKPQQQR). The interval 1-22 (MGDMANSSIEFHPKPQQQREVP) is disordered. Over 1–97 (MGDMANSSIE…NFIPPKQPKT (97 aa)) the chain is Cytoplasmic. Position 8 is a phosphoserine (Ser8). A helical transmembrane segment spans residues 98 to 118 (FLQLVWEALQDVTLIILEVAA). Residues 119–155 (IVSLGLSFYAPPGEESEACGNVSGGAEDEGEAEAGWI) are Extracellular-facing. The helical transmembrane segment at 156–176 (EGAAILLSVICVVLVTAFNDW) threads the bilayer. Residues 177–364 (SKEKQFRGLQ…KEKSVLQGKL (188 aa)) are Cytoplasmic-facing. 2 disordered regions span residues 298–328 (EEEK…GAVA) and 335–354 (KSAE…NVPK). Basic and acidic residues-rich tracts occupy residues 299-308 (EEKKDKKGKQ) and 342-354 (MEER…NVPK). Residues 365–384 (TKLAVQIGKAGLVMSAITVI) traverse the membrane as a helical segment. Topologically, residues 385 to 417 (ILVLYFVIETFVVDGRVWLAECTPVYVQYFVKF) are extracellular. A helical transmembrane segment spans residues 418–435 (FIIGVTVLVVAVPEGLPL). Topologically, residues 436 to 849 (AVTISLAYSV…MWGRNVYDSI (414 aa)) are cytoplasmic. The 4-aspartylphosphate intermediate role is filled by Asp473. Positions 794 and 798 each coordinate Mg(2+). The helical transmembrane segment at 850–869 (SKFLQFQLTVNVVAVIVAFT) threads the bilayer. The Extracellular portion of the chain corresponds to 870–879 (GACITQDSPL). The chain crosses the membrane as a helical span at residues 880–900 (KAVQMLWVNLIMDTFASLALA). The Cytoplasmic segment spans residues 901–920 (TEPPTESLLLRKPYGRDKPL). A helical membrane pass occupies residues 921 to 943 (ISRTMMKNILGHAVYQLTIIFTL). Residues 944–961 (LFVGELFFDIDSGRNAPL) are Extracellular-facing. A helical transmembrane segment spans residues 962-983 (HSPPSEHYTIIFNTFVMMQLFN). The Cytoplasmic portion of the chain corresponds to 984-1002 (EINARKIHGERNVFDGIFS). A helical membrane pass occupies residues 1003-1024 (NPIFCTIVLGTFGIQIVIVQFG). Residues 1025–1034 (GKPFSCSPLS) lie on the Extracellular side of the membrane. The helical transmembrane segment at 1035–1056 (TEQWLWCLFVGVGELVWGQVIA) threads the bilayer. Residues 1057 to 1258 (TIPTSQLKCL…SPLHSMETSL (202 aa)) lie on the Cytoplasmic side of the membrane. Thr1079 carries the post-translational modification Phosphothreonine. The interval 1097–1114 (LRRGQILWFRGLNRIQTQ) is calmodulin-binding subdomain A. Thr1113 is subject to Phosphothreonine; by PKC. The calmodulin-binding subdomain B stretch occupies residues 1115-1124 (MEVVSTFKRS). Position 1126 is a phosphoserine (Ser1126). The segment at 1204-1258 (ENEERLRAPPPPPPNQNNNAIDSGIYLTTHATKSATSSAFSSRPGSPLHSMETSL) is disordered. Low complexity predominate over residues 1231 to 1245 (TTHATKSATSSAFSS).

The protein belongs to the cation transport ATPase (P-type) (TC 3.A.3) family. Type IIB subfamily. As to quaternary structure, interacts with PDZD11. Interacts (via N-terminus) with YWHAE. As to expression, expressed predominantly in brain and skeletal muscle. Expressed in the molecular layer of the cerebellar cortex, in particular in granule cells (at protein level). Expressed in aldosterone producing glomerulosa cells of adrenal glands (at protein level). Detected at low levels in various tissues including testis, stomach, small intestine, and large intestine. In terms of tissue distribution, most abundant form in brain and most other tissues. Most abundant form in skeletal muscle and is also found in brain and at low levels in testis and kidney.

It is found in the cell membrane. The protein localises to the presynaptic cell membrane. The catalysed reaction is Ca(2+)(in) + ATP + H2O = Ca(2+)(out) + ADP + phosphate + H(+). Its function is as follows. ATP-driven Ca(2+) ion pump involved in the maintenance of basal intracellular Ca(2+) levels at the presynaptic terminals. Uses ATP as an energy source to transport cytosolic Ca(2+) ions across the plasma membrane to the extracellular compartment. May counter-transport protons, but the mechanism and the stoichiometry of this Ca(2+)/H(+) exchange remains to be established. The sequence is that of Plasma membrane calcium-transporting ATPase 3 (Atp2b3) from Rattus norvegicus (Rat).